The following is a 126-amino-acid chain: Glycine cleavage system H protein (126 aa).

A Lipoyl-binding domain is found at 22–104 (VATIGITEYA…YEKAWMVKIE (83 aa)). An N6-lipoyllysine modification is found at Lys-63.

This sequence belongs to the GcvH family. In terms of assembly, the glycine cleavage system is composed of four proteins: P, T, L and H. The cofactor is (R)-lipoate.

Functionally, the glycine cleavage system catalyzes the degradation of glycine. The H protein shuttles the methylamine group of glycine from the P protein to the T protein. Is also involved in protein lipoylation via its role as an octanoyl/lipoyl carrier protein intermediate. The sequence is that of Glycine cleavage system H protein from Staphylococcus epidermidis (strain ATCC 35984 / DSM 28319 / BCRC 17069 / CCUG 31568 / BM 3577 / RP62A).